The following is a 320-amino-acid chain: Cytochrome f (320 aa).

An N-terminal signal peptide occupies residues 1–35 (MQTRNTFSWIREEITRSISVSLMIYIITWASISSA). Heme contacts are provided by Y36, C56, C59, and H60. A helical transmembrane segment spans residues 286–306 (VQGLLFFLGSVVLAQIFLVLK).

This sequence belongs to the cytochrome f family. As to quaternary structure, the 4 large subunits of the cytochrome b6-f complex are cytochrome b6, subunit IV (17 kDa polypeptide, petD), cytochrome f and the Rieske protein, while the 4 small subunits are PetG, PetL, PetM and PetN. The complex functions as a dimer. Heme is required as a cofactor.

The protein resides in the plastid. It is found in the chloroplast thylakoid membrane. Functionally, component of the cytochrome b6-f complex, which mediates electron transfer between photosystem II (PSII) and photosystem I (PSI), cyclic electron flow around PSI, and state transitions. In Barbarea verna (Land cress), this protein is Cytochrome f.